The sequence spans 1145 residues: Protocadherin-19 (1145 aa).

The signal sequence occupies residues 1 to 21 (MESLLLPVLLLLAVLWTQAAA). Cadherin domains lie at 22 to 129 (LINL…APSF), 130 to 238 (PAAQ…NPVF), 239 to 346 (GEST…PPII), 350 to 453 (SVNS…HPHF), 454 to 563 (SKPY…TPVI), and 569 to 672 (INGT…QESM). Residues 22-678 (LINLKYSVEE…QESMGSVNLS (657 aa)) are Extracellular-facing. E31, E32, D88, and D90 together coordinate Ca(2+). Cysteines 93 and 99 form a disulfide. Ca(2+) is bound by residues D121, N123, D124, N125, E140, D155, D157, E199, D212, D230, S231, N232, D233, N234, and E249. N-linked (GlcNAc...) asparagine glycosylation occurs at N261. Residues D264, D266, N270, D305, E307, D338, N340, D341, N342, E360, D375, D377, N381, D412, and E414 each contribute to the Ca(2+) site. N420 is a glycosylation site (N-linked (GlcNAc...) asparagine). The Ca(2+) site is built by D427, D445, E446, N447, D448, N449, E464, D479, D481, N485, N522, E524, and D537. Residue N485 is glycosylated (N-linked (GlcNAc...) asparagine). A glycan (N-linked (GlcNAc...) asparagine) is linked at N546. D555, V556, N557, D558, and N559 together coordinate Ca(2+). An N-linked (GlcNAc...) asparagine glycan is attached at N570. Residues D594, D596, N600, and D646 each coordinate Ca(2+). N676 is a glycosylation site (N-linked (GlcNAc...) asparagine). A helical transmembrane segment spans residues 679 to 699 (LIFIIALGSIAGILFVTMIFV). Residues 700–1145 (AIKCKRDNKE…SVKRLKDIVL (446 aa)) are Cytoplasmic-facing. Disordered stretches follow at residues 901-921 (GNSL…EHDV) and 1094-1145 (LEHH…DIVL). 2 stretches are compositionally biased toward basic and acidic residues: residues 906 to 921 (DSGH…EHDV) and 1106 to 1145 (SEAE…DIVL).

As to quaternary structure, homodimer; antiparallel.

Its subcellular location is the cell membrane. Calcium-dependent cell-adhesion protein. The sequence is that of Protocadherin-19 (Pcdh19) from Mus musculus (Mouse).